A 171-amino-acid chain; its full sequence is UPF0398 protein Sez_1569 (171 aa).

The protein belongs to the UPF0398 family.

This chain is UPF0398 protein Sez_1569, found in Streptococcus equi subsp. zooepidemicus (strain MGCS10565).